A 91-amino-acid chain; its full sequence is Elongation factor 1-beta (91 aa).

It belongs to the EF-1-beta/EF-1-delta family.

In terms of biological role, promotes the exchange of GDP for GTP in EF-1-alpha/GDP, thus allowing the regeneration of EF-1-alpha/GTP that could then be used to form the ternary complex EF-1-alpha/GTP/AAtRNA. This Thermococcus onnurineus (strain NA1) protein is Elongation factor 1-beta.